The chain runs to 157 residues: Crossover junction endodeoxyribonuclease RuvC (157 aa).

Active-site residues include Asp7, Glu66, and Asp139. Residues Asp7, Glu66, and Asp139 each coordinate Mg(2+).

Belongs to the RuvC family. Homodimer which binds Holliday junction (HJ) DNA. The HJ becomes 2-fold symmetrical on binding to RuvC with unstacked arms; it has a different conformation from HJ DNA in complex with RuvA. In the full resolvosome a probable DNA-RuvA(4)-RuvB(12)-RuvC(2) complex forms which resolves the HJ. Requires Mg(2+) as cofactor.

It localises to the cytoplasm. It catalyses the reaction Endonucleolytic cleavage at a junction such as a reciprocal single-stranded crossover between two homologous DNA duplexes (Holliday junction).. The RuvA-RuvB-RuvC complex processes Holliday junction (HJ) DNA during genetic recombination and DNA repair. Endonuclease that resolves HJ intermediates. Cleaves cruciform DNA by making single-stranded nicks across the HJ at symmetrical positions within the homologous arms, yielding a 5'-phosphate and a 3'-hydroxyl group; requires a central core of homology in the junction. The consensus cleavage sequence is 5'-(A/T)TT(C/G)-3'. Cleavage occurs on the 3'-side of the TT dinucleotide at the point of strand exchange. HJ branch migration catalyzed by RuvA-RuvB allows RuvC to scan DNA until it finds its consensus sequence, where it cleaves and resolves the cruciform DNA. In Helicobacter pylori (strain Shi470), this protein is Crossover junction endodeoxyribonuclease RuvC.